The primary structure comprises 454 residues: Probable spastin homolog Bm1_53365 (454 aa).

Residue 218–225 (GPPGNGKT) participates in ATP binding.

It belongs to the AAA ATPase family. Spastin subfamily. Homohexamer. The homohexamer is stabilized by ATP-binding. The homohexamer may adopt a ring conformation through which microtubules pass prior to being severed. Interacts with microtubules.

It localises to the cytoplasm. The protein localises to the cytoskeleton. The protein resides in the perinuclear region. It carries out the reaction n ATP + n H2O + a microtubule = n ADP + n phosphate + (n+1) alpha/beta tubulin heterodimers.. Functionally, severs microtubules, probably in an ATP-dependent fashion. This Brugia malayi (Filarial nematode worm) protein is Probable spastin homolog Bm1_53365.